Here is a 36-residue protein sequence, read N- to C-terminus: Photosystem I reaction center subunit VIII (36 aa).

A helical transmembrane segment spans residues 5–27; that stretch reads FLPSILVPLVGLVFPAIAIASLF.

The protein belongs to the PsaI family.

It is found in the plastid. It localises to the chloroplast thylakoid membrane. In terms of biological role, may help in the organization of the PsaL subunit. The sequence is that of Photosystem I reaction center subunit VIII from Chaetosphaeridium globosum (Charophycean green alga).